We begin with the raw amino-acid sequence, 453 residues long: MSSDSSQVKLRFFTREQDESLHVQDAPMYAPISLKRYGLSEVVNHLLGFEKPVPFDFLIDGELLRISLQEYLTKHGLSSETFLNVEYTRAVLPPSFLSSFSNEDWVSSLDVGDNNKIISGSYDGVVRTWNLSGKIEKQYSGHSAPIRAVKYISNTRMVSGGNDRTLRLWKTKNEDLKQPVVDEDDEDIEDGKTLAILEGHKAPVVSIDVSDNSRILSGSYDNTIGFWSTIYKEMTVVDPMEELKNNDSKMSTAAKKRRKLTLKDGTIRRRAPLALLESHTGPVEQVSFDFKDNTVGYSISQDHTIKTWDLVTSRCIDTKTTSYSLLSLAQLPTLNLLACGSSARHITLHDPRIGSTSKITQQQLVGHKNFVVSLDTCPENEYMLCSGSHDGTVKVWDVRANSPMYTITREEQSVEKGVNDKVFAVNWSKNVGIISAGQDKKIQINKGDNIFKS.

The interval 8–89 (VKLRFFTREQ…ETFLNVEYTR (82 aa)) is ubiquitin-like (UBL) domain. Positions 99-453 (SFSNEDWVSS…INKGDNIFKS (355 aa)) are sufficient for interaction with ERB1 and association with 66S pre-ribosomes. WD repeat units lie at residues 101-139 (SNEDWVSSLDVGDNNKIISGSYDGVVRTWNLSGKIEKQY), 141-179 (GHSAPIRAVKYISNTRMVSGGNDRTLRLWKTKNEDLKQP), 199-237 (GHKAPVVSIDVSDNSRILSGSYDNTIGFWSTIYKEMTVV), 278-318 (SHTG…CIDT), 320-359 (TTSYSLLSLAQLPTLNLLACGSSARHITLHDPRIGSTSKI), 366-406 (GHKN…PMYT), and 417-453 (GVNDKVFAVNWSKNVGIISAGQDKKIQINKGDNIFKS).

Belongs to the WD repeat WDR12/YTM1 family. As to quaternary structure, component of the NOP7 complex, composed of ERB1, NOP7 and YTM1. The complex is held together by ERB1, which interacts with NOP7 via its N-terminal domain and with YTM1 via a high-affinity interaction between the seven-bladed beta-propeller domains of the 2 proteins. The NOP7 complex associates with the 66S pre-ribosome. Interacts (via UBL domain) with MDN1 (via VWFA/MIDAS domain).

The protein localises to the nucleus. It is found in the nucleolus. Its subcellular location is the nucleoplasm. In terms of biological role, component of the NOP7 complex, which is required for maturation of the 25S and 5.8S ribosomal RNAs and formation of the 60S ribosome. In Vanderwaltozyma polyspora (strain ATCC 22028 / DSM 70294 / BCRC 21397 / CBS 2163 / NBRC 10782 / NRRL Y-8283 / UCD 57-17) (Kluyveromyces polysporus), this protein is Ribosome biogenesis protein YTM1.